Here is a 905-residue protein sequence, read N- to C-terminus: Dopamine D2-like receptor (905 aa).

The segment at 1 to 23 (MLSPFDWRRGISSSGTGGTMAAQ) is disordered. Topologically, residues 1–377 (MLSPFDWRRG…GELRVVDHNY (377 aa)) are extracellular. N-linked (GlcNAc...) asparagine glycans are attached at residues Asn88, Asn146, Asn156, Asn166, Asn174, Asn257, Asn314, and Asn343. The helical transmembrane segment at 378-398 (WALILILFPILTLFGNILVIL) threads the bilayer. Residues 399-416 (SVCRERSLQTVTNYFIVS) are Cytoplasmic-facing. Residues 417–437 (LAIADLLVAVVVMPFAVYFLV) form a helical membrane-spanning segment. Over 438–450 (NGAWALPDVVCDF) the chain is Extracellular. Cys448 and Cys525 are oxidised to a cystine. A helical membrane pass occupies residues 451–471 (YIAMDVICSTSSIFNLVAISI). The Cytoplasmic portion of the chain corresponds to 472–493 (DRYIAVTQPIKYAKHKNSRRVC). The chain crosses the membrane as a helical span at residues 494–514 (LTILLVWAISAAIGSPIVLGL). At 515-531 (NNTPNREPDVCAFYNAD) the chain is on the extracellular side. The chain crosses the membrane as a helical span at residues 532-552 (FILYSSLSSFYIPCIIMVFLY). Over 553-830 (WNIFKALRSR…AKKERKATKT (278 aa)) the chain is Cytoplasmic. 3 disordered regions span residues 600–631 (SRHASRILPDEAATNTASGSNEEEDENAISPD), 702–753 (ATSA…SVGV), and 780–799 (DSTLSTTSKTSSRKDKKNSQ). Residues 702-722 (ATSAAPRSSGSPPDSPLPSGA) show a composition bias toward low complexity. The segment covering 723–734 (TLQRSSVSSQRR) has biased composition (polar residues). Basic and acidic residues predominate over residues 735–746 (PTGDDSPKRGEP). The helical transmembrane segment at 831-851 (LAIVLGVFLFCWLPFFSCNIM) threads the bilayer. The Extracellular portion of the chain corresponds to 852–869 (DAMCAKFKKDCRPGLTAY). The chain crosses the membrane as a helical span at residues 870 to 890 (MMTTWLGYINSFVNPVIYTIF). The Cytoplasmic portion of the chain corresponds to 891–905 (NPEFRKAFKKIMHMG).

It belongs to the G-protein coupled receptor 1 family. As to expression, highest expression is in adult heads.

It is found in the cell membrane. In terms of biological role, receptor for dopamine. The activity of this receptor is mediated by G proteins which inhibit adenylyl cyclase. This chain is Dopamine D2-like receptor, found in Drosophila melanogaster (Fruit fly).